The sequence spans 60 residues: Regulatory protein DegR (60 aa).

In terms of biological role, stabilizes the phosphorylated form of DegU, leading to enhanced production of levansucrase, alkaline protease, and neutral protease. This Bacillus subtilis subsp. natto protein is Regulatory protein DegR (degR).